Here is a 28-residue protein sequence, read N- to C-terminus: Phospholipase A2 pseudexin C chain (28 aa).

Tyr28 serves as a coordination point for Ca(2+).

The protein belongs to the phospholipase A2 family. Group I subfamily. Ca(2+) serves as cofactor. As to expression, expressed by the venom gland.

It localises to the secreted. The enzyme catalyses a 1,2-diacyl-sn-glycero-3-phosphocholine + H2O = a 1-acyl-sn-glycero-3-phosphocholine + a fatty acid + H(+). Functionally, PLA2 catalyzes the calcium-dependent hydrolysis of the 2-acyl groups in 3-sn-phosphoglycerides. The polypeptide is Phospholipase A2 pseudexin C chain (Pseudechis porphyriacus (Red-bellied black snake)).